We begin with the raw amino-acid sequence, 962 residues long: Splicing regulator ARVCF (962 aa).

A coiled-coil region spans residues 8–46; that stretch reads SAASILASVKEQEARFERLTRALEQERRHVALQLERAQQ. A disordered region spans residues 95-122; the sequence is TVEEDPGTPTSHVSIVTSEDGTTRRTET. Phosphothreonine is present on residues Thr-102 and Thr-104. Residues 102–114 are compositionally biased toward polar residues; sequence TPTSHVSIVTSED. Position 170 is an omega-N-methylarginine (Arg-170). Disordered stretches follow at residues 186–253 and 266–290; these read GGGF…LPER and RSLA…RRRP. Residues 206–217 are compositionally biased toward low complexity; the sequence is RGLGMRPPRAGP. Ser-267 is modified (phosphoserine). Residues 270–280 show a composition bias toward acidic residues; that stretch reads ADDEGGPELEP. Residues Ser-332, Ser-335, Ser-343, and Ser-345 each carry the phosphoserine modification. 6 ARM repeats span residues 348–387, 390–429, 433–467, 468–508, 526–565, and 575–622; these read SARK…HLCF, EGVK…NLSY, TDNK…VTGT, LWNL…NEDS, LRNV…DTDN, and MRNL…GKKA. The interval 590 to 614 is disordered; the sequence is DRYQEAEPGPLGSAVGSQRRRRDDA. Ser-606 bears the Phosphoserine mark. Positions 607–623 match the Nuclear localization signal motif; the sequence is QRRRRDDASCFGGKKAK. The residue at position 642 (Thr-642) is a Phosphothreonine. 4 ARM repeats span residues 646–686, 699–738, 739–781, and 782–826; these read PKRT…AAGA, TYIR…NLSL, DRRN…AVLN, and TIHE…SHVL. The interval 776–962 is required for interaction with RNA-binding proteins DDX5, HNRNPH2 and SRSF1 and with mRNAs; sequence VVAVLNTIHE…AKPQPVDSWV (187 aa). The tract at residues 854-962 is disordered; that stretch reads ATAKGPKGAL…AKPQPVDSWV (109 aa). Phosphoserine occurs at positions 864 and 871. At Thr-872 the chain carries Phosphothreonine. Basic and acidic residues predominate over residues 878 to 887; the sequence is KSLEGEKTGS. Ser-915 bears the Phosphoserine mark. The span at 920-932 shows a compositional bias: basic and acidic residues; sequence ASEKEPLKLDPSR.

Belongs to the beta-catenin family. Component of a ribonucleoprotein complex containing mRNAs and RNA-binding proteins including DDX5, HNRNPH2 and SRSF1 as well as ARVCF. Interacts (via the extreme C-terminus) with FRMPD2 (via the PDZ 2 domain). Interacts with CCDC85B. In terms of tissue distribution, found in all the examined tissues including heart, brain, liver and kidney. Found at low level in lung. Expressed in dermal connective tissue, salivary gland duct and in the corneal layer (at protein level). Expressed in arrector pili muscle (at protein level). High levels detected in epithelial cells with lower levels found in fibroblasts and T lymphocytes.

It localises to the cell junction. The protein resides in the adherens junction. It is found in the nucleus. Its subcellular location is the cytoplasm. In terms of biological role, contributes to the regulation of alternative splicing of pre-mRNAs. In Homo sapiens (Human), this protein is Splicing regulator ARVCF.